The chain runs to 1779 residues: Collagen alpha-1(IV) chain (1779 aa).

Residues 1–23 (MLPFWKRLLYAAVIAGALVGADA) form the signal peptide. An N-linked (GlcNAc...) asparagine glycan is attached at asparagine 72. Disordered regions lie at residues 89–643 (GNRG…KPAL), 655–1187 (DKGY…LPGL), 1200–1285 (TGAP…IGPR), and 1336–1530 (GLPG…RGYE). The span at 144 to 163 (QAGVPGVQGPAGNPGAPGIN) shows a compositional bias: low complexity. Composition is skewed to basic and acidic residues over residues 196–217 (KGEK…KGEP) and 249–259 (PRGEHGLKGEK). The span at 360 to 369 (PGLNGLPGNP) shows a compositional bias: low complexity. The span at 434–443 (GQKGGAGLPG) shows a compositional bias: gly residues. The segment covering 531–545 (GRPGTPGAAGAPGQK) has biased composition (low complexity). Residues 724–747 (PGFHGRDGAKGDKGSFGRSGEKGE) are compositionally biased toward basic and acidic residues. Composition is skewed to low complexity over residues 913 to 931 (VGPI…PGID) and 1015 to 1036 (PGLM…QGLD). Positions 1106 to 1127 (EKGDQGRSGIDGRDGINGEKGE) are enriched in basic and acidic residues. Low complexity predominate over residues 1151 to 1170 (APGMDGLPGAAGAPGAVGYP). Basic and acidic residues-rich tracts occupy residues 1224-1245 (IRGD…EQGE), 1496-1505 (ERGEKGERGL), and 1517-1529 (PKGD…ERGY). One can recognise a Collagen IV NC1 domain in the interval 1555 to 1778 (GILITRHSQS…SRCQVCMKNS (224 aa)). 6 disulfide bridges follow: cysteine 1570-cysteine 1659, cysteine 1603-cysteine 1656, cysteine 1615-cysteine 1621, cysteine 1678-cysteine 1774, cysteine 1712-cysteine 1771, and cysteine 1724-cysteine 1731.

It belongs to the type IV collagen family. In terms of assembly, trimers of two alpha 1(IV) and one alpha 2(IV) chain. Type IV collagen forms a mesh-like network linked through intermolecular interactions between 7S domains and between NC1 domains. In terms of processing, prolines at the third position of the tripeptide repeating unit (G-X-Y) are hydroxylated in some or all of the chains. Post-translationally, type IV collagens contain numerous cysteine residues which are involved in inter- and intramolecular disulfide bonding. 12 of these, located in the NC1 domain, are conserved in all known type IV collagens.

The protein localises to the secreted. The protein resides in the extracellular space. It is found in the extracellular matrix. It localises to the basement membrane. Collagen type IV is specific for basement membranes. This is Collagen alpha-1(IV) chain from Drosophila melanogaster (Fruit fly).